The following is a 509-amino-acid chain: Proto-oncogene tyrosine-protein kinase LCK (509 aa).

G2 is lipidated: N-myristoyl glycine. The interval 2-72 is interactions with CD4 and CD8; it reads GCGCSSHLED…DNLVIALHSY (71 aa). S-palmitoyl cysteine attachment occurs at residues C3 and C5. The SH3 domain occupies 61 to 121; sequence LQDNLVIALH…PFNFVAKANS (61 aa). K99 is covalently cross-linked (Glycyl lysine isopeptide (Lys-Gly) (interchain with G-Cter in ubiquitin)). S102 carries the phosphoserine modification. Residues 127-224 enclose the SH2 domain; sequence WFFKNLSRKD…GLCTRLSRPC (98 aa). Positions 154-242 are interaction with PTPRH; the sequence is RESESTAGSF…WWEDEWEVPR (89 aa). T159 is modified (phosphothreonine). Residue S162 is modified to Phosphoserine. Position 192 is a phosphotyrosine (Y192). At S194 the chain carries Phosphoserine. Residues 245-498 form the Protein kinase domain; the sequence is LKLVERLGAG…YLRSVLEDFF (254 aa). Residues 251-259 and K273 each bind ATP; that span reads LGAGQFGEV. K276 participates in a covalent cross-link: Glycyl lysine isopeptide (Lys-Gly) (interchain with G-Cter in ubiquitin). D364 functions as the Proton acceptor in the catalytic mechanism. A Phosphotyrosine; by autocatalysis modification is found at Y394. Position 505 is a phosphotyrosine; by CSK (Y505).

The protein belongs to the protein kinase superfamily. Tyr protein kinase family. Binds to the cytoplasmic domain of cell surface receptors, such as AXL, CD2, CD4, CD5, CD8, CD44, CD45 and CD122. Also binds to effector molecules, such as PI4K, VAV1, RASA1, FYB1 and to other protein kinases including CDK1, RAF1, ZAP70 and SYK. Binds to phosphatidylinositol 3'-kinase (PI3K) from T-lymphocytes through its SH3 domain and to the tyrosine phosphorylated form of KHDRBS1/p70 through its SH2 domain. Interacts with SQSTM1. Interacts with phosphorylated LIME1. Interacts with CBLB and PTPRH. Interacts with RUNX3. Forms a signaling complex with EPHA1, PTK2B and PI3-KINASE; upon activation by EFNA1 which may regulate T-lymphocytes migration. Associates with ZAP70 and RHOH; these interactions allow LCK-mediated RHOH and CD3 subunit phosphorylations in the presence of functional ZAP70. Interacts with Saimiriine herpesvirus 2 TIP. Interacts with UNC119; this interaction plays a crucial role in activation of LCK. Interacts with CEACAM1 (via cytoplasmic domain); mediates CEACAM1 phosphorylation resulting in PTPN6 recruitment that dephosphorylates TCR stimulation-induced CD247 and ZAP70. Interacts with CD160. Interacts with CD48. Autophosphorylated on Tyr-394, increasing enzymatic activity, this site is dephosphorylated by PTN22. Phosphorylated on Tyr-505 by CSK, decreasing activity. Dephosphorylated by PTPRC/CD45. Dephosphorylation at Tyr-394 by PTPN2 negatively regulates T-cells differentiation. Dephosphorylation at Tyr-394 by DUSP22 negatively regulates T-cell receptor signaling. In terms of processing, myristoylation is required prior to palmitoylation. Post-translationally, palmitoylation regulates association with the plasma membrane and could be mediated by ZDHHC2. 'Lys-63'-linked ubiquitinated at Lys-99 and Lys-276 by UBR2; this modification is required for autophosphorylation at Tyr-394. As to expression, expressed specifically in lymphoid cells.

Its subcellular location is the cell membrane. It localises to the cytoplasm. It is found in the cytosol. It catalyses the reaction L-tyrosyl-[protein] + ATP = O-phospho-L-tyrosyl-[protein] + ADP + H(+). The relative activities of the inhibitory tyrosine-protein kinase CSK and the activating tyrosine-protein phosphatase PTPRC/CD45 determine the level of LCK activity. These interactions allow rapid and efficient activation of LCK in response to TCR stimulation. Non-receptor tyrosine-protein kinase that plays an essential role in the selection and maturation of developing T-cells in the thymus and in the function of mature T-cells. Plays a key role in T-cell antigen receptor (TCR)-linked signal transduction pathways. Constitutively associated with the cytoplasmic portions of the CD4 and CD8 surface receptors. Association of the TCR with a peptide antigen-bound MHC complex facilitates the interaction of CD4 and CD8 with MHC class II and class I molecules, respectively, thereby recruiting the associated LCK protein to the vicinity of the TCR/CD3 complex. LCK then phosphorylates tyrosine residues within the immunoreceptor tyrosine-based activation motifs (ITAM) of the cytoplasmic tails of the TCR-gamma chains and CD3 subunits, initiating the TCR/CD3 signaling pathway. Once stimulated, the TCR recruits the tyrosine kinase ZAP70, that becomes phosphorylated and activated by LCK. Following this, a large number of signaling molecules are recruited, ultimately leading to lymphokine production. LCK also contributes to signaling by other receptor molecules. Associates directly with the cytoplasmic tail of CD2, which leads to hyperphosphorylation and activation of LCK. Also plays a role in the IL2 receptor-linked signaling pathway that controls the T-cell proliferative response. Binding of IL2 to its receptor results in increased activity of LCK. Is expressed at all stages of thymocyte development and is required for the regulation of maturation events that are governed by both pre-TCR and mature alpha beta TCR. Phosphorylates other substrates including RUNX3, PTK2B/PYK2, the microtubule-associated protein MAPT, RHOH or TYROBP. This chain is Proto-oncogene tyrosine-protein kinase LCK (LCK), found in Saimiri sciureus (Common squirrel monkey).